A 45-amino-acid polypeptide reads, in one-letter code: Bomanin Short 2 (45 aa).

The N-terminal stretch at 1–20 is a signal peptide; it reads MKFFSVVTVFVFGLLALANA. A propeptide spans 21–27 (removed by a dipeptidylpeptidase); sequence VPLSPDP. Cys-36 and Cys-39 are joined by a disulfide. At Gly-43 the chain carries Glycine amide.

As to expression, hemolymph (at protein level).

The protein resides in the secreted. Functionally, secreted immune-induced peptide induced by Toll signaling. Has a role in resistance to bacterial and fungal infections. This chain is Bomanin Short 2, found in Drosophila melanogaster (Fruit fly).